Here is a 584-residue protein sequence, read N- to C-terminus: 2-succinyl-5-enolpyruvyl-6-hydroxy-3-cyclohexene-1-carboxylate synthase (584 aa).

The protein belongs to the TPP enzyme family. MenD subfamily. As to quaternary structure, homodimer. Requires Mg(2+) as cofactor. It depends on Mn(2+) as a cofactor. Thiamine diphosphate serves as cofactor.

It carries out the reaction isochorismate + 2-oxoglutarate + H(+) = 5-enolpyruvoyl-6-hydroxy-2-succinyl-cyclohex-3-ene-1-carboxylate + CO2. Its pathway is quinol/quinone metabolism; 1,4-dihydroxy-2-naphthoate biosynthesis; 1,4-dihydroxy-2-naphthoate from chorismate: step 2/7. It participates in quinol/quinone metabolism; menaquinone biosynthesis. In terms of biological role, catalyzes the thiamine diphosphate-dependent decarboxylation of 2-oxoglutarate and the subsequent addition of the resulting succinic semialdehyde-thiamine pyrophosphate anion to isochorismate to yield 2-succinyl-5-enolpyruvyl-6-hydroxy-3-cyclohexene-1-carboxylate (SEPHCHC). This Bacillus cytotoxicus (strain DSM 22905 / CIP 110041 / 391-98 / NVH 391-98) protein is 2-succinyl-5-enolpyruvyl-6-hydroxy-3-cyclohexene-1-carboxylate synthase.